The chain runs to 375 residues: Phytanoyl-CoA hydroxylase-interacting protein-like (375 aa).

Serine 11, serine 12, and serine 15 each carry phosphoserine. A glycan (N-linked (GlcNAc...) asparagine) is linked at asparagine 22. A Phosphoserine modification is found at serine 24. An N-linked (GlcNAc...) asparagine glycan is attached at asparagine 36. In terms of domain architecture, Fibronectin type-III spans 51-160 (VPHNIKINNI…EIIEFCTADY (110 aa)).

The protein belongs to the PHYHIP family.

May play a role in the development of the central system. The protein is Phytanoyl-CoA hydroxylase-interacting protein-like (Phyhipl) of Rattus norvegicus (Rat).